A 189-amino-acid polypeptide reads, in one-letter code: Putative biopolymer transport protein ExbB-like 1 (189 aa).

3 helical membrane-spanning segments follow: residues 14 to 34 (FVTTLVLVWISLYLVMTLWVF), 99 to 119 (LVVLSIISSTAPFIGLFGTVV), and 147 to 167 (LIATAAGILAAIPAYSFYLIL).

Belongs to the ExbB/TolQ family.

The protein localises to the cell inner membrane. The chain is Putative biopolymer transport protein ExbB-like 1 from Helicobacter pylori (strain J99 / ATCC 700824) (Campylobacter pylori J99).